The primary structure comprises 644 residues: Threonine--tRNA ligase (644 aa).

Residues 1–62 form the TGS domain; the sequence is MSFSITLPDG…DSDSEVAIIT (62 aa). A catalytic region spans residues 240–538; that stretch reads DHRTIGRDLD…LTEIYKGAFP (299 aa). The Zn(2+) site is built by cysteine 334, histidine 385, and histidine 515.

This sequence belongs to the class-II aminoacyl-tRNA synthetase family. As to quaternary structure, homodimer. It depends on Zn(2+) as a cofactor.

Its subcellular location is the cytoplasm. The enzyme catalyses tRNA(Thr) + L-threonine + ATP = L-threonyl-tRNA(Thr) + AMP + diphosphate + H(+). Catalyzes the attachment of threonine to tRNA(Thr) in a two-step reaction: L-threonine is first activated by ATP to form Thr-AMP and then transferred to the acceptor end of tRNA(Thr). Also edits incorrectly charged L-seryl-tRNA(Thr). In Lactobacillus helveticus (strain DPC 4571), this protein is Threonine--tRNA ligase.